The sequence spans 360 residues: Photosystem II protein D1 2 (360 aa).

3 helical membrane passes run 29–46, 118–133, and 142–156; these read YIGWFGVLMIPTLLTAVT, HYMIGCICYLGRQWEY, and WICVAYSAPLAATYS. Residue H118 participates in chlorophyll a binding. Pheophytin a is bound at residue Y126. [CaMn4O5] cluster is bound by residues D170 and E189. The chain crosses the membrane as a helical span at residues 197–218; it reads FHMFGVAGVLGGSLFAAMHGSL. Residue H198 participates in chlorophyll a binding. A quinone contacts are provided by residues H215 and 264 to 265; that span reads SF. H215 is a binding site for Fe cation. Residue H272 participates in Fe cation binding. The helical transmembrane segment at 274–288 threads the bilayer; that stretch reads FLGAWPVVCIWLTAM. Residues H332, E333, D342, and A344 each contribute to the [CaMn4O5] cluster site. Residues 345–360 constitute a propeptide that is removed on maturation; sequence AGESAPVALTAPVING.

Belongs to the reaction center PufL/M/PsbA/D family. As to quaternary structure, PSII is composed of 1 copy each of membrane proteins PsbA, PsbB, PsbC, PsbD, PsbE, PsbF, PsbH, PsbI, PsbJ, PsbK, PsbL, PsbM, PsbT, PsbX, PsbY, PsbZ, Psb30/Ycf12, peripheral proteins PsbO, CyanoQ (PsbQ), PsbU, PsbV and a large number of cofactors. It forms dimeric complexes. The cofactor is The D1/D2 heterodimer binds P680, chlorophylls that are the primary electron donor of PSII, and subsequent electron acceptors. It shares a non-heme iron and each subunit binds pheophytin, quinone, additional chlorophylls, carotenoids and lipids. D1 provides most of the ligands for the Mn4-Ca-O5 cluster of the oxygen-evolving complex (OEC). There is also a Cl(-1) ion associated with D1 and D2, which is required for oxygen evolution. The PSII complex binds additional chlorophylls, carotenoids and specific lipids.. In terms of processing, tyr-161 forms a radical intermediate that is referred to as redox-active TyrZ, YZ or Y-Z. C-terminally processed by CtpA; processing is essential to allow assembly of the oxygen-evolving complex and thus photosynthetic growth.

Its subcellular location is the cellular thylakoid membrane. The catalysed reaction is 2 a plastoquinone + 4 hnu + 2 H2O = 2 a plastoquinol + O2. In terms of biological role, photosystem II (PSII) is a light-driven water:plastoquinone oxidoreductase that uses light energy to abstract electrons from H(2)O, generating O(2) and a proton gradient subsequently used for ATP formation. It consists of a core antenna complex that captures photons, and an electron transfer chain that converts photonic excitation into a charge separation. The D1/D2 (PsbA/PsbD) reaction center heterodimer binds P680, the primary electron donor of PSII as well as several subsequent electron acceptors. The polypeptide is Photosystem II protein D1 2 (Acaryochloris marina (strain MBIC 11017)).